A 100-amino-acid chain; its full sequence is Small ribosomal subunit protein uS14c (100 aa).

It belongs to the universal ribosomal protein uS14 family. In terms of assembly, part of the 30S ribosomal subunit.

It is found in the plastid. It localises to the chloroplast. Functionally, binds 16S rRNA, required for the assembly of 30S particles. The chain is Small ribosomal subunit protein uS14c from Guillardia theta (Cryptophyte).